A 536-amino-acid polypeptide reads, in one-letter code: Atrial natriuretic peptide receptor 3 (536 aa).

Residues 1–26 (MRSLLLFTFSACVLLARVLLAGGASS) form the signal peptide. Residues 27 to 40 (GAGDTRPGSRRRAR) constitute a propeptide that is removed on maturation. The Extracellular portion of the chain corresponds to 41 to 478 (EALAAQKIEV…KSSGGLEESA (438 aa)). Asn-81 carries an N-linked (GlcNAc...) asparagine glycan. Chloride is bound by residues Ser-101, Val-130, and Cys-131. 2 disulfides stabilise this stretch: Cys-103/Cys-131 and Cys-208/Cys-256. N-linked (GlcNAc...) asparagine glycans are attached at residues Asn-288 and Asn-389. The helical transmembrane segment at 479 to 499 (VTGIVVGALLGAGLLMAFYFF) threads the bilayer. Over 500–536 (RKKYRITIERRNQQEESNIGKHRELREDSIRSHFSVA) the chain is Cytoplasmic.

The protein belongs to the ANF receptor family. As to quaternary structure, homodimer; disulfide-linked. Interacts with OSTN.

The protein resides in the cell membrane. Functionally, receptor for the natriuretic peptide hormones, binding with similar affinities atrial natriuretic peptide NPPA/ANP, brain natriuretic peptide NPPB/BNP, and C-type natriuretic peptide NPPC/CNP. May function as a clearance receptor for NPPA, NPPB and NPPC, regulating their local concentrations and effects. Acts as a regulator of osteoblast differentiation and bone growth by binding to its ligand osteocrin, thereby preventing binding between NPR3/NPR-C and natriuretic peptides, leading to increase cGMP production. The protein is Atrial natriuretic peptide receptor 3 (Npr3) of Mus musculus (Mouse).